The chain runs to 392 residues: Galactokinase (392 aa).

Residues Arg37, Glu43, His44, and Asp46 each coordinate alpha-D-galactose. Gly136, Gly138, Ser140, and Ser141 together coordinate ATP. An alpha-D-galactose-binding site is contributed by Asp186. Residue Asp186 is the Proton acceptor of the active site. Position 230 is a phosphoserine (Ser230). Tyr236 is a binding site for alpha-D-galactose.

It belongs to the GHMP kinase family. GalK subfamily. In terms of assembly, homodimer.

The enzyme catalyses alpha-D-galactose + ATP = alpha-D-galactose 1-phosphate + ADP + H(+). The protein operates within carbohydrate metabolism; galactose metabolism. In terms of biological role, catalyzes the transfer of a phosphate from ATP to alpha-D-galactose and participates in the first committed step in the catabolism of galactose. The polypeptide is Galactokinase (Homo sapiens (Human)).